The sequence spans 367 residues: Protein RecA (367 aa).

The span at 1–14 shows a compositional bias: polar residues; that stretch reads MSTEVNANQSPNAE. The tract at residues 1–24 is disordered; the sequence is MSTEVNANQSPNAESRQEAARSGE. Residues 15–24 show a composition bias toward basic and acidic residues; it reads SRQEAARSGE. 84 to 91 contacts ATP; the sequence is GPESSGKT. The interval 348-367 is disordered; it reads GSEVSSNSMRPLTTANRKAA. Residues 349–367 are compositionally biased toward polar residues; sequence SEVSSNSMRPLTTANRKAA.

This sequence belongs to the RecA family.

Its subcellular location is the cytoplasm. In terms of biological role, can catalyze the hydrolysis of ATP in the presence of single-stranded DNA, the ATP-dependent uptake of single-stranded DNA by duplex DNA, and the ATP-dependent hybridization of homologous single-stranded DNAs. It interacts with LexA causing its activation and leading to its autocatalytic cleavage. The polypeptide is Protein RecA (Prochlorococcus marinus (strain MIT 9211)).